Here is a 202-residue protein sequence, read N- to C-terminus: MAETAASRTGSVSRKTNETSISVSVNLDGTGKSTISTGVGFFDHMLDQLSRHSLIDMEIDAKGDLHIDDHHTVEDTGIAIGQAISKALGDRRGITRYASIDLAMDETMTKAAVDLSGRPFLVWNVAFSAPKIGTFDTELVREFFHALAQNAGITLHILNHYGANNHHIAETCFKAVARALRTATEIDPRQAGRVPSTKGTLV.

This sequence belongs to the imidazoleglycerol-phosphate dehydratase family.

It localises to the cytoplasm. It carries out the reaction D-erythro-1-(imidazol-4-yl)glycerol 3-phosphate = 3-(imidazol-4-yl)-2-oxopropyl phosphate + H2O. It functions in the pathway amino-acid biosynthesis; L-histidine biosynthesis; L-histidine from 5-phospho-alpha-D-ribose 1-diphosphate: step 6/9. The polypeptide is Imidazoleglycerol-phosphate dehydratase (Rhizobium johnstonii (strain DSM 114642 / LMG 32736 / 3841) (Rhizobium leguminosarum bv. viciae)).